A 123-amino-acid polypeptide reads, in one-letter code: Highly acidic elicitin 20 (123 aa).

The N-terminal stretch at 1-20 is a signal peptide; the sequence is MQFTALFAATAVALVGSVSA. Cystine bridges form between Cys-23/Cys-91, Cys-47/Cys-76, and Cys-71/Cys-115.

Belongs to the elicitin family.

Its subcellular location is the secreted. In terms of biological role, induces local and distal defense responses (incompatible hypersensitive reaction) in plants from the solanaceae and cruciferae families. Elicits leaf necrosis and causes the accumulation of pathogenesis-related proteins. Might interact with the lipidic molecules of the plasma membrane. This is Highly acidic elicitin 20 (B20) from Phytophthora cryptogea.